Consider the following 135-residue polypeptide: Large ribosomal subunit protein uL22 (135 aa).

Residues 112-135 (KKPEKKKLKAKSAKTEEAPKAAEV) are disordered. The span at 124–135 (AKTEEAPKAAEV) shows a compositional bias: basic and acidic residues.

It belongs to the universal ribosomal protein uL22 family. Part of the 50S ribosomal subunit.

Functionally, this protein binds specifically to 23S rRNA; its binding is stimulated by other ribosomal proteins, e.g. L4, L17, and L20. It is important during the early stages of 50S assembly. It makes multiple contacts with different domains of the 23S rRNA in the assembled 50S subunit and ribosome. In terms of biological role, the globular domain of the protein is located near the polypeptide exit tunnel on the outside of the subunit, while an extended beta-hairpin is found that lines the wall of the exit tunnel in the center of the 70S ribosome. The chain is Large ribosomal subunit protein uL22 from Brachyspira hyodysenteriae (strain ATCC 49526 / WA1).